A 192-amino-acid chain; its full sequence is Anthranilate synthase component 2 (192 aa).

The Glutamine amidotransferase type-1 domain maps to 1–192 (MIVLVNNRDS…KNFVEMSRNG (192 aa)). An L-glutamine-binding site is contributed by 50–52 (GPG). Residue Cys-78 is the Nucleophile; for GATase activity of the active site. Residues Gln-82 and 127 to 128 (SL) contribute to the L-glutamine site. Active-site for GATase activity residues include His-165 and Glu-167.

In terms of assembly, heterotetramer consisting of two non-identical subunits: a beta subunit (TrpG) and a large alpha subunit (TrpE).

The catalysed reaction is chorismate + L-glutamine = anthranilate + pyruvate + L-glutamate + H(+). It participates in amino-acid biosynthesis; L-tryptophan biosynthesis; L-tryptophan from chorismate: step 1/5. Part of a heterotetrameric complex that catalyzes the two-step biosynthesis of anthranilate, an intermediate in the biosynthesis of L-tryptophan. In the first step, the glutamine-binding beta subunit (TrpG) of anthranilate synthase (AS) provides the glutamine amidotransferase activity which generates ammonia as a substrate that, along with chorismate, is used in the second step, catalyzed by the large alpha subunit of AS (TrpE) to produce anthranilate. In the absence of TrpG, TrpE can synthesize anthranilate directly from chorismate and high concentrations of ammonia. The chain is Anthranilate synthase component 2 (trpG) from Thermococcus kodakarensis (strain ATCC BAA-918 / JCM 12380 / KOD1) (Pyrococcus kodakaraensis (strain KOD1)).